The following is a 721-amino-acid chain: Polyribonucleotide nucleotidyltransferase (721 aa).

Positions 495 and 501 each coordinate Mg(2+). The KH domain maps to 562–621 (PRITTIKIRPERIKDIIGPGGKTIKDITARTGTSINIEDDGSVSIASPNQDKVEEAIKMI). The S1 motif domain maps to 631–699 (GRIYMGTVRK…RSGKIRLSRK (69 aa)). Residues 699–721 (KEALADSAKKSEGTEPPKGEPAK) are disordered.

Belongs to the polyribonucleotide nucleotidyltransferase family. Mg(2+) is required as a cofactor.

The protein localises to the cytoplasm. The catalysed reaction is RNA(n+1) + phosphate = RNA(n) + a ribonucleoside 5'-diphosphate. In terms of biological role, involved in mRNA degradation. Catalyzes the phosphorolysis of single-stranded polyribonucleotides processively in the 3'- to 5'-direction. The polypeptide is Polyribonucleotide nucleotidyltransferase (Anaeromyxobacter dehalogenans (strain 2CP-C)).